A 509-amino-acid polypeptide reads, in one-letter code: Histidine ammonia-lyase (509 aa).

The 5-imidazolinone (Ala-Gly) cross-link spans 142–144 (ASG). Serine 143 is modified (2,3-didehydroalanine (Ser)).

This sequence belongs to the PAL/histidase family. In terms of processing, contains an active site 4-methylidene-imidazol-5-one (MIO), which is formed autocatalytically by cyclization and dehydration of residues Ala-Ser-Gly.

It localises to the cytoplasm. The catalysed reaction is L-histidine = trans-urocanate + NH4(+). It participates in amino-acid degradation; L-histidine degradation into L-glutamate; N-formimidoyl-L-glutamate from L-histidine: step 1/3. The sequence is that of Histidine ammonia-lyase from Sphingopyxis alaskensis (strain DSM 13593 / LMG 18877 / RB2256) (Sphingomonas alaskensis).